The following is a 78-amino-acid chain: Large ribosomal subunit protein bL28 (78 aa).

The protein belongs to the bacterial ribosomal protein bL28 family.

In Erwinia tasmaniensis (strain DSM 17950 / CFBP 7177 / CIP 109463 / NCPPB 4357 / Et1/99), this protein is Large ribosomal subunit protein bL28.